Reading from the N-terminus, the 377-residue chain is RCC1 domain-containing protein 1 (377 aa).

Residues 1 to 172 (MAEKRHGAWF…VRQLELGAEH (172 aa)) form an interaction with KDM8 region. The stretch at 6 to 57 (HGAWFGFGFCGFGQALGSGNSHHSVYSPEPLHASDDICQVSAGWSYTALVTR) is one RCC1 1 repeat. At arginine 144 the chain carries (3R)-3-hydroxyarginine. RCC1 repeat units follow at residues 179 to 230 (AGQV…CLSE), 232 to 289 (GDIY…IAIQ), and 319 to 372 (TGEL…VYAM).

Found in a complex with KDM8. Interacts (via N-terminus) with KDM8 (via N-terminus). Post-translationally, specifically hydroxylated (with R stereochemistry) at C-3 of ARG-141 by KDM8.

It is found in the chromosome. In terms of biological role, plays a role in transcriptional repression of satellite repeats, possibly by regulating H3K36 methylation levels in centromeric regions together with KDM8. Possibly together with KDM8, is involved in proper mitotic spindle organization and chromosome segregation. Plays a role in regulating alpha-tubulin deacetylation and cytoskeletal microtubule stability, thereby promoting cell migration and TGF-beta-induced epithelial to mesenchymal transition (EMT), potentially through the inhibition of KDM8. The protein is RCC1 domain-containing protein 1 (Rccd1) of Mus musculus (Mouse).